Consider the following 131-residue polypeptide: Large ribosomal subunit protein bL19 (131 aa).

The tract at residues 112–131 (KSARIAERAGGPKASASTEA) is disordered.

This sequence belongs to the bacterial ribosomal protein bL19 family.

This protein is located at the 30S-50S ribosomal subunit interface and may play a role in the structure and function of the aminoacyl-tRNA binding site. This chain is Large ribosomal subunit protein bL19, found in Caulobacter vibrioides (strain ATCC 19089 / CIP 103742 / CB 15) (Caulobacter crescentus).